A 647-amino-acid polypeptide reads, in one-letter code: Threonine--tRNA ligase (647 aa).

A TGS domain is found at 1–61 (MIKITFPDGA…EEDGSIEIVT (61 aa)). A catalytic region spans residues 240–538 (DHRKLGKELD…LIETYKGAFP (299 aa)). Residues Cys334, His385, and His515 each coordinate Zn(2+).

The protein belongs to the class-II aminoacyl-tRNA synthetase family. In terms of assembly, homodimer. The cofactor is Zn(2+).

It localises to the cytoplasm. The catalysed reaction is tRNA(Thr) + L-threonine + ATP = L-threonyl-tRNA(Thr) + AMP + diphosphate + H(+). Its function is as follows. Catalyzes the attachment of threonine to tRNA(Thr) in a two-step reaction: L-threonine is first activated by ATP to form Thr-AMP and then transferred to the acceptor end of tRNA(Thr). Also edits incorrectly charged L-seryl-tRNA(Thr). The protein is Threonine--tRNA ligase of Streptococcus agalactiae serotype V (strain ATCC BAA-611 / 2603 V/R).